A 236-amino-acid chain; its full sequence is METLKLSALPEKDKQQPISHGRFEAYVDNGGTVLAVAGKDYCVIAGDTRMSDGGYGIQTRKYTKIFQLTKKCVLATSGMQADTIALQKRLKSMLESFEKEHGKPMSTPAIAQFLSNTLYYKRFFPYYTFNLVAGVDEQGEGWIWTYDAVGSHERVKYSSQGSGNQLVIPLLDNQVAKFNQQIVEGNKDVSCEQVVSFVKDSITSAGERDIYTGDFADIVVVDKNGVHWEKFELKLD.

The protein belongs to the peptidase T1B family. As to quaternary structure, the 26S proteasome consists of a 20S proteasome core and two 19S regulatory subunits. The 20S proteasome core is composed of 28 subunits that are arranged in four stacked rings, resulting in a barrel-shaped structure. The two end rings are each formed by seven alpha subunits, and the two central rings are each formed by seven beta subunits. The catalytic chamber with the active sites is on the inside of the barrel.

It is found in the cytoplasm. It localises to the nucleus. Its function is as follows. Non-catalytic component of the proteasome, a multicatalytic proteinase complex which is characterized by its ability to cleave peptides with Arg, Phe, Tyr, Leu, and Glu adjacent to the leaving group at neutral or slightly basic pH. The proteasome has an ATP-dependent proteolytic activity. The sequence is that of Proteasome subunit beta type-1 (psmB1) from Dictyostelium discoideum (Social amoeba).